Here is a 63-residue protein sequence, read N- to C-terminus: UPF0512 protein X (63 aa).

The protein belongs to the UPF0512 family.

The polypeptide is UPF0512 protein X (Dictyostelium discoideum (Social amoeba)).